Here is a 198-residue protein sequence, read N- to C-terminus: GTP cyclohydrolase-2 (198 aa).

Residue 52 to 56 (RMHSE) participates in GTP binding. The Zn(2+) site is built by Cys-57, Cys-68, and Cys-70. GTP is bound by residues Gln-73, 94-96 (EGR), and Thr-116. Asp-128 serves as the catalytic Proton acceptor. Arg-130 serves as the catalytic Nucleophile. GTP-binding residues include Thr-151 and Lys-156.

The protein belongs to the GTP cyclohydrolase II family. Zn(2+) serves as cofactor.

It carries out the reaction GTP + 4 H2O = 2,5-diamino-6-hydroxy-4-(5-phosphoribosylamino)-pyrimidine + formate + 2 phosphate + 3 H(+). It participates in cofactor biosynthesis; riboflavin biosynthesis; 5-amino-6-(D-ribitylamino)uracil from GTP: step 1/4. In terms of biological role, catalyzes the conversion of GTP to 2,5-diamino-6-ribosylamino-4(3H)-pyrimidinone 5'-phosphate (DARP), formate and pyrophosphate. The sequence is that of GTP cyclohydrolase-2 from Vibrio parahaemolyticus serotype O3:K6 (strain RIMD 2210633).